Reading from the N-terminus, the 152-residue chain is Ribosome maturation factor RimP (152 aa).

The protein belongs to the RimP family.

It is found in the cytoplasm. Required for maturation of 30S ribosomal subunits. The protein is Ribosome maturation factor RimP of Burkholderia vietnamiensis (strain G4 / LMG 22486) (Burkholderia cepacia (strain R1808)).